Reading from the N-terminus, the 301-residue chain is Ethylmalonyl-CoA decarboxylase (301 aa).

Lys211 is modified (N6-acetyllysine; alternate). Lys211 bears the N6-succinyllysine; alternate mark. Residue Lys295 is modified to N6-succinyllysine.

Belongs to the enoyl-CoA hydratase/isomerase family.

It is found in the cytoplasm. Its subcellular location is the cytosol. It catalyses the reaction (2S)-ethylmalonyl-CoA + H(+) = butanoyl-CoA + CO2. It carries out the reaction (S)-methylmalonyl-CoA + H(+) = propanoyl-CoA + CO2. The enzyme catalyses (2R)-ethylmalonyl-CoA + H(+) = butanoyl-CoA + CO2. Decarboxylates ethylmalonyl-CoA, a potentially toxic metabolite, to form butyryl-CoA, suggesting it might be involved in metabolite proofreading. Acts preferentially on (S)-ethylmalonyl-CoA but also has some activity on the (R)-isomer. Also has methylmalonyl-CoA decarboxylase activity at lower level. The protein is Ethylmalonyl-CoA decarboxylase (ECHDC1) of Pongo abelii (Sumatran orangutan).